A 201-amino-acid chain; its full sequence is Putative 3-methyladenine DNA glycosylase (201 aa).

It belongs to the DNA glycosylase MPG family.

In Trichodesmium erythraeum (strain IMS101), this protein is Putative 3-methyladenine DNA glycosylase.